The sequence spans 316 residues: UPF0725 protein At1g02770 (316 aa).

The protein belongs to the UPF0725 (EMB2204) family.

In Arabidopsis thaliana (Mouse-ear cress), this protein is UPF0725 protein At1g02770.